The primary structure comprises 359 residues: Phospho-N-acetylmuramoyl-pentapeptide-transferase (359 aa).

10 helical membrane passes run 3–23, 55–75, 80–100, 117–137, 156–176, 187–207, 231–251, 255–275, 280–300, and 334–354; these read QIMI…PALI, VAIL…GLAF, ITAS…VGFL, TAKT…VLQF, IATV…VVSA, LDGL…LITF, LALI…WNAA, IFMG…LSVT, ILAV…VLQI, and FWLL…GEWL.

The protein belongs to the glycosyltransferase 4 family. MraY subfamily. Mg(2+) is required as a cofactor.

The protein resides in the cell inner membrane. The enzyme catalyses UDP-N-acetyl-alpha-D-muramoyl-L-alanyl-gamma-D-glutamyl-meso-2,6-diaminopimeloyl-D-alanyl-D-alanine + di-trans,octa-cis-undecaprenyl phosphate = di-trans,octa-cis-undecaprenyl diphospho-N-acetyl-alpha-D-muramoyl-L-alanyl-D-glutamyl-meso-2,6-diaminopimeloyl-D-alanyl-D-alanine + UMP. It functions in the pathway cell wall biogenesis; peptidoglycan biosynthesis. Catalyzes the initial step of the lipid cycle reactions in the biosynthesis of the cell wall peptidoglycan: transfers peptidoglycan precursor phospho-MurNAc-pentapeptide from UDP-MurNAc-pentapeptide onto the lipid carrier undecaprenyl phosphate, yielding undecaprenyl-pyrophosphoryl-MurNAc-pentapeptide, known as lipid I. The sequence is that of Phospho-N-acetylmuramoyl-pentapeptide-transferase from Mycobacterium marinum (strain ATCC BAA-535 / M).